The chain runs to 67 residues: MARITVEDCLKQIPNRFELALAATYRARQLVQGHTPKVDAKDKPTVTALREIAAGQVGIEMLKKVPS.

It belongs to the RNA polymerase subunit omega family. The RNAP catalytic core consists of 2 alpha, 1 beta, 1 beta' and 1 omega subunit. When a sigma factor is associated with the core the holoenzyme is formed, which can initiate transcription.

The catalysed reaction is RNA(n) + a ribonucleoside 5'-triphosphate = RNA(n+1) + diphosphate. Promotes RNA polymerase assembly. Latches the N- and C-terminal regions of the beta' subunit thereby facilitating its interaction with the beta and alpha subunits. This Ralstonia nicotianae (strain ATCC BAA-1114 / GMI1000) (Ralstonia solanacearum) protein is DNA-directed RNA polymerase subunit omega.